We begin with the raw amino-acid sequence, 562 residues long: Teichoic acid ribitol-phosphate polymerase TarL (562 aa).

The protein belongs to the CDP-glycerol glycerophosphotransferase family.

The protein localises to the cell membrane. The catalysed reaction is 4-O-[di(2R)-glycerylphospho]-N-acetyl-beta-D-mannosaminyl-(1-&gt;4)-N-acetyl-alpha-D-glucosaminyl di-trans,octa-cis-undecaprenyl diphosphate + n CDP-L-ribitol = 4-O-[(D-ribitylphospho)(n)-di{(2R)-glycerylphospho}]-N-acetyl-beta-D-mannosaminyl-(1-&gt;4)-N-acetyl-alpha-D-glucosaminyl di-trans,octa-cis-undecaprenyl diphosphate + n CMP + n H(+). Its pathway is cell wall biogenesis; poly(ribitol phosphate) teichoic acid biosynthesis. Functionally, responsible for the polymerization of the main chain of the major teichoic acid by sequential transfer of ribitol phosphate units from CDP-ribitol to the second glycerol phosphate attached to the disaccharide linkage unit. Synthesizes polymers of more than 40 ribitol phosphate units in length. In Staphylococcus aureus (strain NCTC 8325 / PS 47), this protein is Teichoic acid ribitol-phosphate polymerase TarL (tarL).